The sequence spans 364 residues: Trans-enoyl reductase ccsC (364 aa).

52–55 (CDYK) contacts NADP(+). A substrate-binding site is contributed by 141–148 (TGLATLGM). Residues 176 to 179 (SSSV), 199 to 202 (SPRN), tyrosine 217, and 264 to 265 (LE) each bind NADP(+). Substrate is bound at residue 284 to 288 (GPALL). NADP(+) is bound at residue 353–354 (VS).

The protein belongs to the zinc-containing alcohol dehydrogenase family. Monomer.

It functions in the pathway mycotoxin biosynthesis. Functionally, trans-enoyl reductase; part of the gene cluster that mediates the biosynthesis of a family of the mycotoxins cytochalasins E and K. The hybrid PKS-NRPS synthetase ccsA and the enoyl reductase ccsC are responsible for fusion of phenylalanine with an octaketide backbone and subsequent release of the stable tetramic acid precursor. The polyketide synthase module (PKS) of the PKS-NRPS ccsA is responsible for the synthesis of the octaketide backbone. The downstream nonribosomal peptide synthetase (NRPS) amidates the carboxyl end of the octaketide with a phenylalanine. A reductase-like domain (R) at the C-terminus catalyzes the reductive release of the polyketide-amino acid intermediate. Because ccsA lacks a designated enoylreductase (ER) domain, the required activity is provided the enoyl reductase ccsC. Upon formation of the 11-membered carbocycle-fused perhydroisoindolone intermediate, a number of oxidative steps are required to afford the final cytochalasin E and K, including two hydroxylations at C17 and C18, one alcohol oxidation at C17, one epoxidation at C6 and C7 and two Baeyer-Villiger oxidations. The oxidative modification at C17, C18 and the C6-C7 epoxidation are likely to be catalyzed by the two cytochrome P450 oxygenases ccsD and ccsG. CcsD may be responsible for the epoxidation of the C6-C7 double bond. CcsG may be responsible for the successive oxidative modifications at C17 and C18. The double Baeyer-Villiger oxidations of ketocytochalasin to precytochalasin and cytochalasin Z(16) are among the final steps leading to cytochalasin E and K and are catalyzed by ccsB. The first oxygen insertion step follows that of the classic BVMO mechanism, generating the ester precytochalasin. Release of precytochalasin into an aqueous environment can generate the shunt product iso-precytochalasin through spontaneous isomerization. Alternatively, precytochalasin can undergo further oxidation by ccsB to yield the in-line carbonate-containing cytochalasin Z(16). Cytochalasin Z(16) is a precursor to cytochalasin E and cytochalasin K, whereas iso-precytochalasin is a precursor to cytochalasin Z(17) and rosellichalasin. The hydrolyase ccsE may catalyze hydrolysis of epoxide bond in cytochalasin E to afford cytochalasin K. The function of ccsF has not been assigned but it may play a role in post-PKS-NRPS biosynthetic step, resistance or transport of cytochalasins and related PKS-NRPS products. In Aspergillus clavatus (strain ATCC 1007 / CBS 513.65 / DSM 816 / NCTC 3887 / NRRL 1 / QM 1276 / 107), this protein is Trans-enoyl reductase ccsC.